Consider the following 301-residue polypeptide: 4-hydroxybenzoate octaprenyltransferase (301 aa).

7 consecutive transmembrane segments (helical) span residues 34–54 (IGSLLLLWPTWWALWLAAGGL), 57–77 (LWTLFVFTAGVWLTRSAGCVI), 108–128 (LWVFVVLMLVAFALVLSLNWL), 163–183 (WGIPMGFAAVQGSVPLLAWLL), 222–242 (DLIAQGVLYALMFAALVLVGL), 248–268 (IAYWAGLGIAALLVAYEFHIA), and 280–300 (FLHNNWVGLAIFVGIAASLAL).

This sequence belongs to the UbiA prenyltransferase family. Requires Mg(2+) as cofactor.

The protein resides in the cell inner membrane. The catalysed reaction is all-trans-octaprenyl diphosphate + 4-hydroxybenzoate = 4-hydroxy-3-(all-trans-octaprenyl)benzoate + diphosphate. Its pathway is cofactor biosynthesis; ubiquinone biosynthesis. Functionally, catalyzes the prenylation of para-hydroxybenzoate (PHB) with an all-trans polyprenyl group. Mediates the second step in the final reaction sequence of ubiquinone-8 (UQ-8) biosynthesis, which is the condensation of the polyisoprenoid side chain with PHB, generating the first membrane-bound Q intermediate 3-octaprenyl-4-hydroxybenzoate. This Xanthomonas campestris pv. campestris (strain 8004) protein is 4-hydroxybenzoate octaprenyltransferase.